The following is a 122-amino-acid chain: Basic phospholipase A2 homolog ecarpholin S (122 aa).

Intrachain disulfides connect C26/C115, C28/C44, C43/C95, C49/C122, C50/C88, C57/C81, and C75/C86. The segment at 105–117 (KKYTYYPNFWCKG) is important for membrane-damaging activities in eukaryotes and bacteria; heparin-binding.

Expressed by the venom gland.

Its subcellular location is the secreted. Suramin inhibits the myotoxic activity. In terms of biological role, snake venom phospholipase A2 homolog that lacks enzymatic activity. Shows high myotoxin activities and displays edema-inducing activities. This is Basic phospholipase A2 homolog ecarpholin S from Echis carinatus (Saw-scaled viper).